The chain runs to 356 residues: Carbamoyl phosphate synthase small chain (356 aa).

The interval 1 to 160 is CPSase; it reads MKGYLKLEDG…TKKPYRIAGI (160 aa). Residues Ser45, Gly211, and Gly213 each contribute to the L-glutamine site. Residues 163-350 enclose the Glutamine amidotransferase type-1 domain; it reads KLAFIDLGTK…MDIVMVYKRR (188 aa). The Nucleophile role is filled by Cys238. Residues Leu239, Gln242, Asn280, Gly282, and Tyr283 each contribute to the L-glutamine site. Active-site residues include His323 and Glu325.

Belongs to the CarA family. In terms of assembly, composed of two chains; the small (or glutamine) chain promotes the hydrolysis of glutamine to ammonia, which is used by the large (or ammonia) chain to synthesize carbamoyl phosphate. Tetramer of heterodimers (alpha,beta)4.

The enzyme catalyses hydrogencarbonate + L-glutamine + 2 ATP + H2O = carbamoyl phosphate + L-glutamate + 2 ADP + phosphate + 2 H(+). The catalysed reaction is L-glutamine + H2O = L-glutamate + NH4(+). Its pathway is amino-acid biosynthesis; L-arginine biosynthesis; carbamoyl phosphate from bicarbonate: step 1/1. It functions in the pathway pyrimidine metabolism; UMP biosynthesis via de novo pathway; (S)-dihydroorotate from bicarbonate: step 1/3. Small subunit of the glutamine-dependent carbamoyl phosphate synthetase (CPSase). CPSase catalyzes the formation of carbamoyl phosphate from the ammonia moiety of glutamine, carbonate, and phosphate donated by ATP, constituting the first step of 2 biosynthetic pathways, one leading to arginine and/or urea and the other to pyrimidine nucleotides. The small subunit (glutamine amidotransferase) binds and cleaves glutamine to supply the large subunit with the substrate ammonia. This chain is Carbamoyl phosphate synthase small chain, found in Caldanaerobacter subterraneus subsp. tengcongensis (strain DSM 15242 / JCM 11007 / NBRC 100824 / MB4) (Thermoanaerobacter tengcongensis).